The sequence spans 551 residues: Probable CoA ligase CCL5 (551 aa).

ATP-binding positions include 204 to 212 (SSGTTGASK), 345 to 350 (QGYGLT), aspartate 431, 443 to 446 (VVDR), and lysine 537. The SBD1 stretch occupies residues 274-345 (EIHEMLSAIE…ENYPTVSILQ (72 aa)). Residues 346–410 (GYGLTESTGI…LRGPTIMKGY (65 aa)) are SBD2.

The protein belongs to the ATP-dependent AMP-binding enzyme family. Mostly expressed at low levels in glandular trichomes (lupulin glands) after flowering, and, to a lower extent, in stems, leaves, cones and flowers.

Its subcellular location is the cytoplasm. The protein resides in the cytosol. The polypeptide is Probable CoA ligase CCL5 (Humulus lupulus (European hop)).